Consider the following 1151-residue polypeptide: Semaphorin-5B (1151 aa).

Over 1–1036 the chain is Extracellular; sequence MPCGFSPSPV…TDCAGFNLIH (1036 aa). Residues 103–553 form the Sema domain; that stretch reads HPTVAFEDLQ…LRDGVLRVPL (451 aa). Residue asparagine 153 is glycosylated (N-linked (GlcNAc...) asparagine). Disulfide bonds link cysteine 172/cysteine 182 and cysteine 199/cysteine 208. 2 N-linked (GlcNAc...) asparagine glycosylation sites follow: asparagine 236 and asparagine 345. Disulfide bonds link cysteine 322–cysteine 425 and cysteine 346–cysteine 388. Asparagine 436 is a glycosylation site (N-linked (GlcNAc...) asparagine). The region spanning 555–602 is the PSI domain; the sequence is RCAAYRSQGACLGARDPYCGWDGKQQRCSTLEDSSNMSLWTQNITACP. 2 TSP type-1 domains span residues 664-720 and 722-771; these read NGAW…TPCP and PIFW…EGCP. Intrachain disulfides connect cysteine 676-cysteine 713, cysteine 680-cysteine 719, cysteine 691-cysteine 703, cysteine 734-cysteine 765, cysteine 738-cysteine 770, and cysteine 749-cysteine 755. Threonine 788 carries O-linked (GalNAc...) threonine glycosylation. 3 consecutive TSP type-1 domains span residues 853–908, 910–965, and 966–1010; these read SGGW…QACP, RGAW…QACP, and EGWS…RPCP. 6 disulfides stabilise this stretch: cysteine 865–cysteine 902, cysteine 869–cysteine 907, cysteine 880–cysteine 892, cysteine 922–cysteine 959, cysteine 926–cysteine 964, and cysteine 937–cysteine 949. A helical; Signal-anchor for type III membrane protein membrane pass occupies residues 1037–1057; the sequence is LVATGISCFLGSGLLTLAVYL. Residues 1058–1151 lie on the Cytoplasmic side of the membrane; it reads SCQHCQRQSQ…SPGQRCFPNS (94 aa).

The protein belongs to the semaphorin family.

Its subcellular location is the membrane. May act as a positive axonal guidance cue. In Homo sapiens (Human), this protein is Semaphorin-5B (SEMA5B).